Here is a 199-residue protein sequence, read N- to C-terminus: N-(5'-phosphoribosyl)anthranilate isomerase (199 aa).

This sequence belongs to the TrpF family.

The enzyme catalyses N-(5-phospho-beta-D-ribosyl)anthranilate = 1-(2-carboxyphenylamino)-1-deoxy-D-ribulose 5-phosphate. Its pathway is amino-acid biosynthesis; L-tryptophan biosynthesis; L-tryptophan from chorismate: step 3/5. The sequence is that of N-(5'-phosphoribosyl)anthranilate isomerase from Campylobacter jejuni subsp. jejuni serotype O:2 (strain ATCC 700819 / NCTC 11168).